Reading from the N-terminus, the 298-residue chain is Zinc finger protein-like 1 homolog (298 aa).

The B box-type; degenerate zinc finger occupies Met1 to Trp43. An RING-type; atypical zinc finger spans residues Cys53–Thr101. The segment at Ala199–Thr230 is disordered. Position 214 is a phosphoserine (Ser214). Residues Trp255–Leu275 traverse the membrane as a helical segment.

This sequence belongs to the ZFPL1 family.

It localises to the membrane. The protein is Zinc finger protein-like 1 homolog of Drosophila erecta (Fruit fly).